Reading from the N-terminus, the 328-residue chain is D-cysteine desulfhydrase (328 aa).

An N6-(pyridoxal phosphate)lysine modification is found at lysine 51.

It belongs to the ACC deaminase/D-cysteine desulfhydrase family. In terms of assembly, homodimer. Requires pyridoxal 5'-phosphate as cofactor.

The enzyme catalyses D-cysteine + H2O = hydrogen sulfide + pyruvate + NH4(+) + H(+). In terms of biological role, catalyzes the alpha,beta-elimination reaction of D-cysteine and of several D-cysteine derivatives. It could be a defense mechanism against D-cysteine. In Salmonella schwarzengrund (strain CVM19633), this protein is D-cysteine desulfhydrase.